The chain runs to 333 residues: Ribokinase (333 aa).

Substrate contacts are provided by residues 10 to 12 (NYD), 38 to 42 (GKGLN), and Glu149. ATP contacts are provided by residues Asn193 and 248-253 (TLGSRG). Asp277 and Thr279 together coordinate K(+). An ATP-binding site is contributed by 282 to 283 (GD). Residue Asp283 coordinates substrate. The active-site Proton acceptor is the Asp283. K(+) is bound by residues Thr313, Arg316, Gly318, and Ser322.

It belongs to the carbohydrate kinase PfkB family. Ribokinase subfamily. Homodimer. The cofactor is Mg(2+).

The protein localises to the cytoplasm. It is found in the nucleus. The enzyme catalyses D-ribose + ATP = D-ribose 5-phosphate + ADP + H(+). It participates in carbohydrate metabolism; D-ribose degradation; D-ribose 5-phosphate from beta-D-ribopyranose: step 2/2. With respect to regulation, activated by a monovalent cation that binds near, but not in, the active site. The most likely occupant of the site in vivo is potassium. Ion binding induces a conformational change that may alter substrate affinity. Functionally, catalyzes the phosphorylation of ribose at O-5 in a reaction requiring ATP and magnesium. The resulting D-ribose-5-phosphate can then be used either for sythesis of nucleotides, histidine, and tryptophan, or as a component of the pentose phosphate pathway. The polypeptide is Ribokinase (Saccharomyces cerevisiae (strain ATCC 204508 / S288c) (Baker's yeast)).